The primary structure comprises 41 residues: Photosystem I reaction center subunit IX (41 aa).

A helical transmembrane segment spans residues 7–27 (YLSTAPVITAIWLGITAGILI).

This sequence belongs to the PsaJ family.

The protein localises to the cellular thylakoid membrane. Functionally, may help in the organization of the PsaE and PsaF subunits. The chain is Photosystem I reaction center subunit IX from Cyanothece sp. (strain PCC 7425 / ATCC 29141).